A 480-amino-acid chain; its full sequence is Nuclear receptor subfamily 6 group A member 1 (480 aa).

Positions 1 to 32 (MERDEPPPSGGGGGGGSAGFLEPPAALPPPPR) are disordered. Positions 57–132 (QRTCLICGDR…MGMNRKAIRE (76 aa)) form a DNA-binding region, nuclear receptor. Zn(2+) is bound by residues Cys-60, Cys-63, Cys-77, Cys-80, Cys-96, Cys-102, Cys-112, and Cys-115. 2 consecutive NR C4-type zinc fingers follow at residues 60–80 (CLICGDRATGLHYGIISCEGC) and 96–120 (CSRDKNCVMSRKQRNRCQYCRLLKC). Disordered regions lie at residues 131 to 150 (REDGMPGGRNKSIGPVQISE) and 162 to 199 (FEEEANHWSNHGDSDHSSPGNRASESNQPSPGSTLSSS). Basic and acidic residues predominate over residues 165–177 (EANHWSNHGDSDH). The interval 172 to 253 (HGDSDHSSPG…RSLDPQSYSL (82 aa)) is sufficient for interaction with UIMC1. Residues 187–199 (SNQPSPGSTLSSS) show a composition bias toward low complexity. The NR LBD domain occupies 249–480 (QSYSLIHQLL…HSCKTSVGKE (232 aa)).

It belongs to the nuclear hormone receptor family. NR6 subfamily. In terms of assembly, homodimer. Interacts with UIMC1. In terms of tissue distribution, shows highest expression in the germ cells of the adult testis.

It is found in the nucleus. In terms of biological role, orphan nuclear receptor that binds to a response element containing the sequence 5'-TCAAGGTCA-3'. Acts as a regulator of embryonic stem cell pluripotency by mediating repression of POU5F1/OCT4: binds to the DR0 element within the POU5F1/OCT4 promoter and inhibits POU5F1/OCT4 expression during embryonic stem cell differentiation. Involved in the regulation of gene expression in germ cell development during gametogenesis. The polypeptide is Nuclear receptor subfamily 6 group A member 1 (NR6A1) (Homo sapiens (Human)).